The following is a 119-amino-acid chain: Large ribosomal subunit protein uL18 (119 aa).

Belongs to the universal ribosomal protein uL18 family. In terms of assembly, part of the 50S ribosomal subunit; part of the 5S rRNA/L5/L18/L25 subcomplex. Contacts the 5S and 23S rRNAs.

This is one of the proteins that bind and probably mediate the attachment of the 5S RNA into the large ribosomal subunit, where it forms part of the central protuberance. The polypeptide is Large ribosomal subunit protein uL18 (Clostridium kluyveri (strain ATCC 8527 / DSM 555 / NBRC 12016 / NCIMB 10680 / K1)).